A 341-amino-acid polypeptide reads, in one-letter code: Thiamine-phosphate synthase (341 aa).

Residues 1 to 123 (MAVVEEQVVL…AAAAKEWRYR (123 aa)) form a unknown region. The interval 61–80 (AARDTPHDPGTGLEHPDEGV) is disordered. The interval 124 to 341 (VYTLESTATG…AWFLERLNRG (218 aa)) is thiamine-phosphate synthase. 4-amino-2-methyl-5-(diphosphooxymethyl)pyrimidine-binding positions include 171–175 (QLREK) and Asn-203. Mg(2+) is bound by residues Asp-204 and Asp-223. Ser-242 lines the 4-amino-2-methyl-5-(diphosphooxymethyl)pyrimidine pocket. 268-270 (TPT) is a 2-[(2R,5Z)-2-carboxy-4-methylthiazol-5(2H)-ylidene]ethyl phosphate binding site. Residue Lys-271 participates in 4-amino-2-methyl-5-(diphosphooxymethyl)pyrimidine binding. Gly-298 is a 2-[(2R,5Z)-2-carboxy-4-methylthiazol-5(2H)-ylidene]ethyl phosphate binding site.

The protein belongs to the thiamine-phosphate synthase family. Requires Mg(2+) as cofactor.

The catalysed reaction is 2-[(2R,5Z)-2-carboxy-4-methylthiazol-5(2H)-ylidene]ethyl phosphate + 4-amino-2-methyl-5-(diphosphooxymethyl)pyrimidine + 2 H(+) = thiamine phosphate + CO2 + diphosphate. It catalyses the reaction 2-(2-carboxy-4-methylthiazol-5-yl)ethyl phosphate + 4-amino-2-methyl-5-(diphosphooxymethyl)pyrimidine + 2 H(+) = thiamine phosphate + CO2 + diphosphate. The enzyme catalyses 4-methyl-5-(2-phosphooxyethyl)-thiazole + 4-amino-2-methyl-5-(diphosphooxymethyl)pyrimidine + H(+) = thiamine phosphate + diphosphate. It functions in the pathway cofactor biosynthesis; thiamine diphosphate biosynthesis; thiamine phosphate from 4-amino-2-methyl-5-diphosphomethylpyrimidine and 4-methyl-5-(2-phosphoethyl)-thiazole: step 1/1. Condenses 4-methyl-5-(beta-hydroxyethyl)thiazole monophosphate (THZ-P) and 2-methyl-4-amino-5-hydroxymethyl pyrimidine pyrophosphate (HMP-PP) to form thiamine monophosphate (TMP). The polypeptide is Thiamine-phosphate synthase (Gloeobacter violaceus (strain ATCC 29082 / PCC 7421)).